A 278-amino-acid polypeptide reads, in one-letter code: Octanoyl-[GcvH]:protein N-octanoyltransferase (278 aa).

The BPL/LPL catalytic domain maps to Ser-44–Leu-249. The active-site Acyl-thioester intermediate is Cys-148.

It belongs to the octanoyltransferase LipL family.

It carries out the reaction N(6)-octanoyl-L-lysyl-[glycine-cleavage complex H protein] + L-lysyl-[lipoyl-carrier protein] = N(6)-octanoyl-L-lysyl-[lipoyl-carrier protein] + L-lysyl-[glycine-cleavage complex H protein]. It participates in protein modification; protein lipoylation via endogenous pathway; protein N(6)-(lipoyl)lysine from octanoyl-[acyl-carrier-protein]. Functionally, catalyzes the amidotransfer (transamidation) of the octanoyl moiety from octanoyl-GcvH to the lipoyl domain of the E2 subunit of lipoate-dependent enzymes. The sequence is that of Octanoyl-[GcvH]:protein N-octanoyltransferase from Halalkalibacterium halodurans (strain ATCC BAA-125 / DSM 18197 / FERM 7344 / JCM 9153 / C-125) (Bacillus halodurans).